We begin with the raw amino-acid sequence, 320 residues long: MDRPGALDRLRTAVEAFSTAHLGAVERWCVALSGGPDSLALTAVAARLRPTTAVIVDHGLQPDSAAVAQTARAQAIALGCVAAQVISVHVDGEGGLEAAARRARYAALAAHRDGPVLLGHTLDDQAETVLLGLGRGSGVRSIAGMRPHDPPWCRPLLGQRRAVTHAACAELGLTAWQDPHNSDRRFARARLRAEVLPLLEEVLGGGVVEALARTATALREDNELLDALAERALPAARAGAGLQVAALAGLDAPVRRRVIRAWLLAGGATGLTDKQIRGVDNLVTAWRGQGAVAVGSSLPGERLFAGRRDGVLTLWREPVR.

An ATP-binding site is contributed by 33-38 (SGGPDS).

The protein belongs to the tRNA(Ile)-lysidine synthase family.

The protein resides in the cytoplasm. It catalyses the reaction cytidine(34) in tRNA(Ile2) + L-lysine + ATP = lysidine(34) in tRNA(Ile2) + AMP + diphosphate + H(+). In terms of biological role, ligates lysine onto the cytidine present at position 34 of the AUA codon-specific tRNA(Ile) that contains the anticodon CAU, in an ATP-dependent manner. Cytidine is converted to lysidine, thus changing the amino acid specificity of the tRNA from methionine to isoleucine. The sequence is that of tRNA(Ile)-lysidine synthase from Mycolicibacterium paratuberculosis (strain ATCC BAA-968 / K-10) (Mycobacterium paratuberculosis).